A 432-amino-acid polypeptide reads, in one-letter code: Ribulose bisphosphate carboxylase-like protein 2 (432 aa).

Mg(2+) contacts are provided by lysine 198, aspartate 200, and glutamate 201. Lysine 198 is modified (N6-carboxylysine).

This sequence belongs to the RuBisCO large chain family. Type IV subfamily. As to quaternary structure, homodimer. Mg(2+) is required as a cofactor.

Functionally, may be involved in sulfur metabolism and oxidative stress response. Does not show RuBisCO activity. The sequence is that of Ribulose bisphosphate carboxylase-like protein 2 (rlp2) from Rhodopseudomonas palustris (strain ATCC BAA-98 / CGA009).